The primary structure comprises 518 residues: Major facilitator superfamily domain-containing protein 8 (518 aa).

The disordered stretch occupies residues 1 to 20; sequence MAGLRNESEQEPLLGDTPGS. The Cytoplasmic portion of the chain corresponds to 1 to 40; it reads MAGLRNESEQEPLLGDTPGSREWDILETEEHYKSRWRSIR. Residues 13–14 carry the Dileucine internalization motif motif; sequence LL. Residues 41–61 traverse the membrane as a helical segment; sequence ILYLTMFLSSVGFSVVMMSIW. Over 62 to 74 the chain is Extracellular; that stretch reads PYLQKIDPTADTS. The helical transmembrane segment at 75–95 threads the bilayer; the sequence is FLGWVIASYSLGQMVASPIFG. At 96 to 105 the chain is on the cytoplasmic side; it reads LWSNYRPRKE. The helical transmembrane segment at 106–126 threads the bilayer; sequence PLIVSILISVAANCLYAYLHI. Residues 127-131 lie on the Extracellular side of the membrane; it reads PASHN. The chain crosses the membrane as a helical span at residues 132–152; sequence KYYMLVARGLLGIGAGNVAVV. At 153–173 the chain is on the cytoplasmic side; sequence RSYTAGATSLQERTSSMANIS. The helical transmembrane segment at 174–194 threads the bilayer; it reads MCQALGFILGPVFQTCFTFLG. Topologically, residues 195–211 are extracellular; sequence EKGVTWDVIKLQINMYT. The helical transmembrane segment at 212–232 threads the bilayer; the sequence is TPVLLSAFLGILNIILILAIL. At 233–266 the chain is on the cytoplasmic side; that stretch reads REHRVDDSGRQCKSINFEEASTDEAQVPQGNIDQ. A helical transmembrane segment spans residues 267 to 287; it reads VAVVAINVLFFVTLFIFALFE. Topologically, residues 288 to 304 are extracellular; that stretch reads TIITPLTMDMYAWTQEQ. A helical transmembrane segment spans residues 305–325; that stretch reads AVLYNGIILAALGVEAVVIFL. The Cytoplasmic segment spans residues 326 to 337; sequence GVKLLSKKIGER. A helical transmembrane segment spans residues 338–358; it reads AILLGGLIVVWVGFFILLPWG. The Extracellular segment spans residues 359–412; it reads NQFPKIQWEDLHNNSIPNTTFGEIIIGLWKSPMEDDNERPTGCSIEQAWCLYTP. N371 and N376 each carry an N-linked (GlcNAc...) asparagine glycan. The helical transmembrane segment at 413-433 threads the bilayer; sequence VIHLAQFLTSAVLIGLGYPVC. Over 434-451 the chain is Cytoplasmic; that stretch reads NLMSYTLYSKILGPKPQG. A helical transmembrane segment spans residues 452–472; that stretch reads VYMGWLTASGSGARILGPMFI. At 473–482 the chain is on the extracellular side; that stretch reads SQVYAHWGPR. A helical membrane pass occupies residues 483-503; the sequence is WAFSLVCGIIVLTITLLGVVY. Residues 504–518 are Cytoplasmic-facing; sequence KRLIALSVRYGRIQE.

It belongs to the major facilitator superfamily. In terms of tissue distribution, expressed at very low levels in all tissues tested.

Its subcellular location is the endosome membrane. It localises to the lysosome membrane. The catalysed reaction is chloride(in) = chloride(out). It carries out the reaction iodide(out) = iodide(in). It catalyses the reaction fluoride(in) = fluoride(out). Its activity is regulated as follows. Inhibited by chloride channel blockers 4,4'-diisothiocyano-2,2'-stilbenedisulfonate (DIDS), niflumic acid (NFA), and 5-Nitro-2-(3-phenylpropylamino) benzoic acid (NPPB). Its function is as follows. Outward-rectifying chloride channel involved in endolysosomal chloride homeostasis, membrane fusion and function. Conducts chloride currents up to hundreds of picoamperes. Regulates lysosomal calcium content by reducing the lysosomal membrane potential, thereby activating TRPML1 channel and further release of lysosomal calcium ions. Regulates the pH in endolysosomal compartments and may contribute to progressive acidification from endosome to lysosome. Permeable to other halides such as iodide and fluoride ions. This is Major facilitator superfamily domain-containing protein 8 from Homo sapiens (Human).